The primary structure comprises 714 residues: Calpain-1 catalytic subunit (714 aa).

One can recognise a Calpain catalytic domain in the interval 55-354 (LFRDEAFPPV…FTRLEICNLT (300 aa)). 2 residues coordinate Ca(2+): glutamine 109 and aspartate 114. Catalysis depends on residues cysteine 115, histidine 272, and asparagine 296. Ca(2+) is bound by residues aspartate 318 and aspartate 323. Threonine 354 carries the post-translational modification Phosphothreonine. Positions 355–526 (PDALKSQRVR…KKAGTQELDD (172 aa)) are domain III. The tract at residues 527 to 542 (QVQAILPDEQVLSEEE) is linker. The tract at residues 543–713 (IDENFKALFR…LFKWLQLTMF (171 aa)) is domain IV. EF-hand domains lie at 585 to 618 (FSLE…NRIR), 615 to 650 (NRIR…AGFK), and 680 to 714 (VRLE…TMFA). Ca(2+) is bound by residues aspartate 598, aspartate 600, asparagine 602, lysine 604, glutamate 609, aspartate 628, aspartate 630, serine 632, serine 634, and glutamate 639.

Belongs to the peptidase C2 family. As to quaternary structure, forms a heterodimer with a small (regulatory) subunit CAPNS1. It depends on Ca(2+) as a cofactor. Undergoes calcium-induced successive autoproteolytic cleavages that generate a membrane-bound 78 kDa active form and an intracellular 75 kDa active form. Calpastatin reduces with high efficiency the transition from 78 kDa to 75 kDa calpain forms.

The protein resides in the cytoplasm. It localises to the cell membrane. The catalysed reaction is Broad endopeptidase specificity.. Its activity is regulated as follows. Activated by micromolar concentrations of calcium and inhibited by calpastatin. Its function is as follows. Calcium-regulated non-lysosomal thiol-protease which catalyzes limited proteolysis of substrates involved in cytoskeletal remodeling and signal transduction. Proteolytically cleaves CTBP1. Cleaves and activates caspase-7 (CASP7). The polypeptide is Calpain-1 catalytic subunit (Sus scrofa (Pig)).